Consider the following 40-residue polypeptide: Cytolysin EnT (40 aa).

A plays an important role in the hemolytic activity region spans residues 3–12; sequence ALAGTIIEGA. The N-terminal region stretch occupies residues 11 to 30; that stretch reads GASLTFSVLTTILDALGSVS.

The protein belongs to the actinoporin family. Sea anemone subfamily. In terms of assembly, octamer or nonamer in membranes. Monomer in the soluble state.

The protein resides in the secreted. It localises to the nematocyst. Its subcellular location is the target cell membrane. Functionally, pore-forming protein that forms cations-selective hydrophilic pores of around 1 nm and causes cytolysis. Pore formation is a multi-step process that involves specific recognition of membrane sphingomyelin (but neither cholesterol nor phosphatidylcholine) using aromatic rich region and adjacent phosphocholine (POC) binding site, firm binding to the membrane (mainly driven by hydrophobic interactions) accompanied by the transfer of the N-terminal region to the lipid-water interface and finally pore formation after oligomerization of monomers. This toxin shows hemolytic activities. In Entacmaea quadricolor (Bubble-tip anemone), this protein is Cytolysin EnT.